A 620-amino-acid polypeptide reads, in one-letter code: MDDTNQFMVSVAKIDAGMAILLTPSFHIIEFPSVLLPNDATAGSIIDISVHHNKEEEIARETAFDDVQKEIFETYGQKLPSPPVLKLKNATQTSIVLEWDPLQLSTARLKSLCLYRNNVRVLNISNPMTTHNAKLSGLSLDTEYDFSLVLDTTAGTFPSKHITIKTLRMIDLTGIQVCVGNMVPNEMEALQKCIERIHARPIQTSVRIDTTHFICSSTGGPEYEKAKAANIPILGLDYLLKCESEGRLVNVSGFYIENRASYNANASINSVEAAQNAAPNLNATTEQPKNTAEVAQGAASAKAPQQTTQQGTQNSANAEPSSSASVPAEAPETEAEQSIDVSSDIGLRSDSSKPNEAPTSSENIKADQPENSTKQENPEEDMQIKDAEEHSNLESTPAAQQTSEVEANNHQEKPSSLPAVEQINVNEENNTPETEGLEDEKEENNTAAESLINQEETTSGEAVTKSTVESSANEEEAEPNEIIEENAVKSLLNQEGPATNEEVEKNNANSENANGLTDEKIIEAPLDTKENSDDDKPSPAAAEDIGTNGAIEEIPQVSEVLEPEKAHTTNLQLNALDKEEDLNITTVKQSSEPTADDNLIPNKEAEIIQSSDEFESVNID.

Residues 79-169 (LPSPPVLKLK…KHITIKTLRM (91 aa)) form the Fibronectin type-III domain. The BRCT domain maps to 167-256 (LRMIDLTGIQ…RLVNVSGFYI (90 aa)). Disordered stretches follow at residues 287–566 (QPKN…PEKA) and 588–620 (KQSSEPTADDNLIPNKEAEIIQSSDEFESVNID). Polar residues predominate over residues 303 to 314 (APQQTTQQGTQN). Over residues 315 to 330 (SANAEPSSSASVPAEA) the composition is skewed to low complexity. A compositionally biased stretch (polar residues) spans 352–375 (SKPNEAPTSSENIKADQPENSTKQ). Positions 382-392 (MQIKDAEEHSN) are enriched in basic and acidic residues. Polar residues predominate over residues 393 to 406 (LESTPAAQQTSEVE). Residues 424–434 (NVNEENNTPET) show a composition bias toward low complexity. A compositionally biased stretch (polar residues) spans 445-468 (NTAAESLINQEETTSGEAVTKSTV). Positions 472–484 (ANEEEAEPNEIIE) are enriched in acidic residues. The span at 506-515 (NNANSENANG) shows a compositional bias: polar residues. Residues 517 to 537 (TDEKIIEAPLDTKENSDDDKP) show a composition bias toward basic and acidic residues.

This sequence belongs to the CHS5 family.

It is found in the golgi apparatus. In terms of biological role, required for cell fusion, independently of fus1. Appears to have a role in transporting proteins that are involved in mating. May act as a scaffold to retain cell fusion proteins in the cisternae of the Golgi. Degraded at the onset of mating and this leads to release of cell fusion proteins. This Schizosaccharomyces pombe (strain 972 / ATCC 24843) (Fission yeast) protein is Cell fusion protein cfr1 (cfr1).